A 667-amino-acid polypeptide reads, in one-letter code: Leucine-rich repeat-containing protein 43 (667 aa).

Residues 1 to 11 (METSESSTSDY) show a composition bias toward polar residues. The tract at residues 1 to 24 (METSESSTSDYRQTEGEGEGVPGT) is disordered. LRR repeat units lie at residues 148 to 169 (KLEE…NLPP), 170 to 191 (TLKV…CSAP), 194 to 213 (RLQH…ESLY), and 221 to 242 (QLVS…ILGL). The 39-residue stretch at 256–294 (NPLSLVPYYRGFTIDSLAHLCVLDDITVSPNEKHQFRGL) folds into the LRRCT domain. 3 disordered regions span residues 374–407 (FSGT…TEEM), 533–570 (ESPL…RQDP), and 616–640 (SKKV…SGYQ). A compositionally biased stretch (acidic residues) spans 377–386 (TDEEDQQEDP). Basic residues predominate over residues 390 to 399 (RHRHRGRQRF). Positions 540–553 (KGKDNNKKKEPAKD) are enriched in basic and acidic residues. Basic residues predominate over residues 617-627 (KKVKKSLKKDR).

The chain is Leucine-rich repeat-containing protein 43 (Lrrc43) from Mus musculus (Mouse).